The chain runs to 319 residues: Cytochrome f (319 aa).

An N-terminal signal peptide occupies residues 1–34; that stretch reads MQNRNTYEWTKKMTRLISVLVMIHIITRTSISNA. Residues Tyr-35, Cys-55, Cys-58, and His-59 each coordinate heme. The chain crosses the membrane as a helical span at residues 285–305; sequence VKGLLLFLASVILAQIFLVLK.

The protein belongs to the cytochrome f family. The 4 large subunits of the cytochrome b6-f complex are cytochrome b6, subunit IV (17 kDa polypeptide, petD), cytochrome f and the Rieske protein, while the 4 small subunits are PetG, PetL, PetM and PetN. The complex functions as a dimer. Heme serves as cofactor.

It is found in the plastid. The protein resides in the chloroplast thylakoid membrane. Component of the cytochrome b6-f complex, which mediates electron transfer between photosystem II (PSII) and photosystem I (PSI), cyclic electron flow around PSI, and state transitions. This Pinus koraiensis (Korean pine) protein is Cytochrome f.